A 361-amino-acid chain; its full sequence is Core-capsid bridging protein (361 aa).

Residues 311-321 (RRRRVARRSKS) are compositionally biased toward basic residues. Residues 311 to 331 (RRRRVARRSKSTGRFVAAPRK) form a disordered region.

Belongs to the adenoviridae core-capsid bridging protein family. Monomer. Homodimer. Exists in equilibrium between monomers and dimers in solution. Interacts with the histone-like nucleoprotein; this interactions bridge the virus core to the capsid. Interacts with core protein X; this interactions bridge the virus core to the capsid. Interacts with the endosome lysis protein VI; this interactions bridge the virus core to the capsid. Interacts with the peripentonal hexons. Interacts with host NPM1; this interaction might play a role in virus assembly.

It is found in the virion. Its subcellular location is the host nucleus. It localises to the host nucleolus. In terms of biological role, associates loosely with the viral DNA to form an outer shell around the nucleoprotein-DNA complex and links it with the capsid by binding the endosome lysis protein. Dissociates from the viral genome during entry. Might be involved in nuclear capsid assembly of the viral particles through its association with NPM1/nucleophosmin. The protein is Core-capsid bridging protein of Bovine adenovirus 2 (BAdV-2).